The chain runs to 142 residues: Small ribosomal subunit protein uS12 (142 aa).

The disordered stretch occupies residues 1 to 22 (MPTFNQLVRKGRKAAKKKSTAP). Over residues 9–19 (RKGRKAAKKKS) the composition is skewed to basic residues. A 3-methylthioaspartic acid modification is found at aspartate 102.

It belongs to the universal ribosomal protein uS12 family. In terms of assembly, part of the 30S ribosomal subunit. Contacts proteins S8 and S17. May interact with IF1 in the 30S initiation complex.

Its function is as follows. With S4 and S5 plays an important role in translational accuracy. Interacts with and stabilizes bases of the 16S rRNA that are involved in tRNA selection in the A site and with the mRNA backbone. Located at the interface of the 30S and 50S subunits, it traverses the body of the 30S subunit contacting proteins on the other side and probably holding the rRNA structure together. The combined cluster of proteins S8, S12 and S17 appears to hold together the shoulder and platform of the 30S subunit. The protein is Small ribosomal subunit protein uS12 of Acetivibrio thermocellus (strain ATCC 27405 / DSM 1237 / JCM 9322 / NBRC 103400 / NCIMB 10682 / NRRL B-4536 / VPI 7372) (Clostridium thermocellum).